We begin with the raw amino-acid sequence, 3295 residues long: Toxin CdiA (3295 aa).

The two-partner system transport domain (TPS) stretch occupies residues 33–366; the sequence is PSSGVGHTQR…GKGNTQLTTA (334 aa). A helical transmembrane segment spans residues 55–75; the sequence is LLIALGCISLSAQAAIVADGS. Positions 353 to 1574 are FHA-1; that stretch reads GVLYGKGNTQ…LLVYAKTLTN (1222 aa). A disordered region spans residues 1165-1185; the sequence is PPSSIPPSSTQSSSTQASASP. Positions 1575-1796 are receptor binding domain (RBD); sequence RRQILTATTD…LKTDKGDYAP (222 aa). A YP domain region spans residues 1797 to 1977; it reads GPEAALSLAN…GVKPGDLRAN (181 aa). The tract at residues 1806–1831 is disordered; it reads NISPPSSLDATGPRGVPPPSDDLNRT. A periplasmic FHA-1 repeat (pFR) region spans residues 1998–2035; it reads GAISASNNLQISMAKDITLNNRCGLLQAGNHLQLSTLN. An FHA-2 region spans residues 2022-2676; sequence LLQAGNHLQL…DRDNYDAKQS (655 aa). Disordered stretches follow at residues 2260–2292 and 2823–2847; these read TSQT…EGRS and QQNV…FDKE. Residues 2823 to 2838 are compositionally biased toward polar residues; it reads QQNVDDLSRDTGNANG. Residues 3073–3076 carry the VENN CT cleavage motif motif; that stretch reads VENN. Residues 3073-3295 are CT domain; that stretch reads VENNLLGGNE…QKKDAMEDSK (223 aa). The tract at residues 3276-3295 is disordered; it reads SSEFGSSLIQQKKDAMEDSK. Residues 3286 to 3295 show a composition bias toward basic and acidic residues; the sequence is QKKDAMEDSK.

The protein in the N-terminal section; belongs to the CdiA toxin family. In terms of assembly, probably interacts with cognate immunity protein CdiI.

The protein resides in the membrane. It is found in the target cell. It localises to the target cell cytoplasm. Its function is as follows. Toxic component of a toxin-immunity protein module, which functions as a cellular contact-dependent growth inhibition (CDI) system. CDI modules allow bacteria to communicate with and inhibit the growth of closely related neighboring bacteria in a contact-dependent fashion. CDI is neutralized by its cognate immunity protein CdiI, but not by non-cognate CdiI from other bacteria. Functionally, the CdiA protein is thought to be exported from the cell through the central lumen of CdiB, the other half of its two-partner system (TPS). The TPS domain probably remains associated with CdiB while the FHA-1 domain forms an extended filament with the receptor-binding domain (RBD) at its extremity; in the secretion arrested state the C-terminus of the RBD and YP domains form a hairpin-like structure as the FHA-2, PT and CT domains are periplasmic. The YP domain is probably responsible for this arrest at the point where it re-enters the host cell periplasm. Upon binding to a target cell outer membrane receptor a signal is transmitted to activate secretion. The filament elongates slightly, the rest of CdiA is secreted and the FHA-2 domain becomes stably associated with the target cell's outer membrane where it facilitates entry of the toxic CT domain into the target cell periplasm. From there the toxic CT domain is cleaved and gains access to the target cell cytoplasm via an inner membrane protein. The protein is Toxin CdiA of Yersinia pestis.